The primary structure comprises 632 residues: tRNA uridine 5-carboxymethylaminomethyl modification enzyme MnmG (632 aa).

Residues 16 to 21, V128, and S183 each bind FAD; that span reads GAGHAG. The interval 206-225 is disordered; the sequence is PRVNGNTIDYSKTEEEPGDK. A compositionally biased stretch (basic and acidic residues) spans 216 to 225; it reads SKTEEEPGDK. Residue 277–291 coordinates NAD(+); it reads GPRYCPSIEDKVVRF. FAD is bound at residue Q374.

This sequence belongs to the MnmG family. As to quaternary structure, homodimer. Heterotetramer of two MnmE and two MnmG subunits. FAD is required as a cofactor.

Its subcellular location is the cytoplasm. Its function is as follows. NAD-binding protein involved in the addition of a carboxymethylaminomethyl (cmnm) group at the wobble position (U34) of certain tRNAs, forming tRNA-cmnm(5)s(2)U34. This Lactobacillus acidophilus (strain ATCC 700396 / NCK56 / N2 / NCFM) protein is tRNA uridine 5-carboxymethylaminomethyl modification enzyme MnmG.